The sequence spans 525 residues: Peptide chain release factor 3 (525 aa).

A tr-type G domain is found at alanine 9–glutamine 276. GTP is bound by residues serine 18 to threonine 25, aspartate 86 to histidine 90, and asparagine 140 to aspartate 143.

The protein belongs to the TRAFAC class translation factor GTPase superfamily. Classic translation factor GTPase family. PrfC subfamily.

The protein resides in the cytoplasm. In terms of biological role, increases the formation of ribosomal termination complexes and stimulates activities of RF-1 and RF-2. It binds guanine nucleotides and has strong preference for UGA stop codons. It may interact directly with the ribosome. The stimulation of RF-1 and RF-2 is significantly reduced by GTP and GDP, but not by GMP. The polypeptide is Peptide chain release factor 3 (Francisella philomiragia subsp. philomiragia (strain ATCC 25017 / CCUG 19701 / FSC 153 / O#319-036)).